A 401-amino-acid polypeptide reads, in one-letter code: UPF0283 membrane protein SO_1811 (401 aa).

Positions 1–22 (MSVELLPHSTEPHANGADKSVS) are disordered. Helical transmembrane passes span 99–119 (LARL…VLGL), 129–149 (LFSF…VGVI), and 239–259 (ESAV…IILW).

It belongs to the UPF0283 family.

It is found in the cell inner membrane. The sequence is that of UPF0283 membrane protein SO_1811 from Shewanella oneidensis (strain ATCC 700550 / JCM 31522 / CIP 106686 / LMG 19005 / NCIMB 14063 / MR-1).